Here is a 208-residue protein sequence, read N- to C-terminus: Large ribosomal subunit protein bL25 (208 aa).

Positions 185–195 (DLEEETGEAEG) are enriched in acidic residues. The interval 185-208 (DLEEETGEAEGETAAAPAEEGAES) is disordered. Residues 196-208 (ETAAAPAEEGAES) are compositionally biased toward low complexity.

This sequence belongs to the bacterial ribosomal protein bL25 family. CTC subfamily. As to quaternary structure, part of the 50S ribosomal subunit; part of the 5S rRNA/L5/L18/L25 subcomplex. Contacts the 5S rRNA. Binds to the 5S rRNA independently of L5 and L18.

Its function is as follows. This is one of the proteins that binds to the 5S RNA in the ribosome where it forms part of the central protuberance. This chain is Large ribosomal subunit protein bL25, found in Rhodococcus opacus (strain B4).